A 264-amino-acid polypeptide reads, in one-letter code: Carbohydrate deacetylase (264 aa).

Asp20 (proton acceptor) is an active-site residue. Mg(2+) is bound by residues Asp21, His60, and His127. Residue His215 is the Proton donor of the active site.

The protein belongs to the YdjC deacetylase family. In terms of assembly, homodimer. Mg(2+) is required as a cofactor.

Functionally, probably catalyzes the deacetylation of acetylated carbohydrates an important step in the degradation of oligosaccharides. The protein is Carbohydrate deacetylase of Thermus thermophilus (strain ATCC 27634 / DSM 579 / HB8).